The sequence spans 419 residues: Peroxisomal membrane protein PMP47B (419 aa).

Solcar repeat units follow at residues 6-120, 142-230, and 239-369; these read YDDL…TGKT, LSVW…LKSF, and VTPV…LLIL. A helical membrane pass occupies residues 12 to 32; that stretch reads AFAGAGGGLLSMTLTYPLVTL. Residues 44–53 are compositionally biased toward basic and acidic residues; the sequence is KNEEEEKENS. The disordered stretch occupies residues 44-69; sequence KNEEEEKENSNEDGSLSPKSSNTSNI. Residues 56-69 are compositionally biased toward polar residues; it reads DGSLSPKSSNTSNI. 3 consecutive transmembrane segments (helical) span residues 98-118, 204-224, and 245-265; these read SALFGIAVTNFVYYYFYELTG, FTGIVPALFLVLNPIIQYTIF, and LLLGAFGKLIATIITYPYITL. The disordered stretch occupies residues 274 to 305; sequence MTENNEDSEKERTDSVQSLPEDGSDEDNSKEN. 2 helical membrane-spanning segments follow: residues 310–330 and 349–369; these read TINKIISKLPSPIVSMFIIGY and LLQSILNAAFLFYFKEELLIL.

This sequence belongs to the mitochondrial carrier (TC 2.A.29) family.

It is found in the peroxisome membrane. Its function is as follows. May have transport activity. The polypeptide is Peroxisomal membrane protein PMP47B (PMP47B) (Candida boidinii (Yeast)).